Here is a 422-residue protein sequence, read N- to C-terminus: MSSQVVGIEPLYIKAEPASPDSPKGSSETETEPPVALAPGPAPTRCLPGHKEEEDGEGAGPGEQGGGKLVLSSLPKRLCLVCGDVASGYHYGVASCEACKAFFKRTIQGSIEYSCPASNECEITKRRRKACQACRFTKCLRVGMLKEGVRLDRVRGGRQKYKRRPEVDPLPFPGSFPAGPLAVAGGPRKTAPVNALVSHLLVVEPEKLYAMPDPAGPDGHLPAVATLCDLFDREIVVTISWAKSIPGFSSLSLSDQMSVLQSVWMEVLVLGVAQRSLPLQDELAFAEDLVLDEEGARAAGLGELGAVLLQLVRRLQALRLEREEYVLLKALALANSDSVHIEDAEAVEQLREALHEALLEYEAGRAGPGGGAERRRAGRLLLTLPLLRQTAGKVLAHFYGVKLEGKVPMHKLFLEMLEAMMD.

The segment at 1–67 is disordered; sequence MSSQVVGIEP…GAGPGEQGGG (67 aa). Residues S19 and S22 each carry the phosphoserine modification. Positions 58–67 are enriched in gly residues; sequence GAGPGEQGGG. The nuclear receptor DNA-binding region spans 76–151; sequence KRLCLVCGDV…VGMLKEGVRL (76 aa). 2 NR C4-type zinc fingers span residues 79-99 and 115-134; these read CLVC…CEAC and CPAS…CQAC. 4 positions are modified to N6-acetyllysine; by PCAF/KAT2B: K129, K138, K160, and K162. Residues K189 and K402 each participate in a glycyl lysine isopeptide (Lys-Gly) (interchain with G-Cter in SUMO2) cross-link. The region spanning 192 to 420 is the NR LBD domain; the sequence is PVNALVSHLL…KLFLEMLEAM (229 aa).

This sequence belongs to the nuclear hormone receptor family. NR3 subfamily. Binds DNA as a monomer or a homodimer. Interacts (via the AF2 domain) with coactivator PPARGC1A (via the L3 motif); the interaction greatly enhances transcriptional activity of genes involved in energy metabolism. Interacts with PIAS4; the interaction enhances sumoylation. Interacts with MAPK15; promotes re-localization of ESRRA to the cytoplasm through a XPO1-dependent mechanism then inhibits ESRRA transcriptional activity. Phosphorylation on Ser-19 enhances sumoylation on Lys-14 increasing repression of transcriptional activity. Post-translationally, sumoylated with SUMO2. Main site is Lys-14 which is enhanced by phosphorylation on Ser-19, cofactor activation, and by interaction with PIAS4. Sumoylation enhances repression of transcriptional activity, but has no effect on subcellular location nor on DNA binding. In terms of processing, reversibly acetylated. Acetylation by PCAF/KAT2 at Lys-129, Lys-138, Lys-160 and Lys-162 and PCAF/KAT2 decreases transcriptional activity probably by inhibiting DNA-binding activity; deacetylation involves SIRT1 and HDAC8 and increases DNA-binding.

It is found in the nucleus. It localises to the cytoplasm. Binds to an ERR-alpha response element (ERRE) containing a single consensus half-site, 5'-TNAAGGTCA-3'. Can bind to the medium-chain acyl coenzyme A dehydrogenase (MCAD) response element NRRE-1 and may act as an important regulator of MCAD promoter. May function as a modulator of the estrogen signaling pathway in the uterus. Induces the expression of PERM1 in the skeletal muscle. This Canis lupus familiaris (Dog) protein is Steroid hormone receptor ERR1 (ESRRA).